The primary structure comprises 111 residues: Vacuolar ATPase assembly integral membrane protein VMA21 (111 aa).

At 1–39 the chain is on the cytoplasmic side; it reads MATRRIVATEKSILEKDDHIGSSPAAGEKSNITPAVPLD. Residues 40–60 form a helical membrane-spanning segment; it reads VILKLLAFTLAMVVIPIGSYF. Residues 61-73 lie on the Lumenal side of the membrane; it reads VTVNSIFKGNSTY. The chain crosses the membrane as a helical span at residues 74-94; that stretch reads AGALAAIMANVVLVAYVVVAM. At 95-111 the chain is on the cytoplasmic side; that stretch reads NEDQTEQEKAKEGKKDR. Positions 108-111 match the Prevents secretion from ER motif; it reads KKDR.

It belongs to the VMA21 family.

The protein resides in the endoplasmic reticulum membrane. It localises to the endoplasmic reticulum-Golgi intermediate compartment membrane. The protein localises to the cytoplasmic vesicle. Its subcellular location is the COPII-coated vesicle membrane. Required for the assembly of the V0 complex of the vacuolar ATPase (V-ATPase) in the endoplasmic reticulum. The polypeptide is Vacuolar ATPase assembly integral membrane protein VMA21 (Pyricularia oryzae (strain 70-15 / ATCC MYA-4617 / FGSC 8958) (Rice blast fungus)).